The primary structure comprises 65 residues: Small ribosomal subunit protein eS27 (65 aa).

Residues Cys20, Cys23, Cys39, and Cys42 each contribute to the Zn(2+) site. The C4-type zinc finger occupies 20-42; it reads CIDCGNEQIVFSHPATKVRCLVC.

The protein belongs to the eukaryotic ribosomal protein eS27 family. As to quaternary structure, part of the 30S ribosomal subunit. Zn(2+) serves as cofactor.

The sequence is that of Small ribosomal subunit protein eS27 from Thermococcus gammatolerans (strain DSM 15229 / JCM 11827 / EJ3).